A 166-amino-acid chain; its full sequence is MTDFLEIRPLTKEAFTPFGDVIETTPSSMRHINGGQTERHHALSAPEAAGEGARIILNIFRGQPRVFPHKIDMMERHPLGSQSFSPLSGRPFLVVVAQDDGGRPARPQVFLARGDQGVNYRRNVWHYPLMPLQAVSDFLVADREGPGNNLEEYFFDEPFMIAEPSL.

The protein belongs to the ureidoglycolate lyase family. In terms of assembly, homodimer. It depends on Ni(2+) as a cofactor.

It catalyses the reaction (S)-ureidoglycolate = urea + glyoxylate. Its pathway is nitrogen metabolism; (S)-allantoin degradation. Its function is as follows. Catalyzes the catabolism of the allantoin degradation intermediate (S)-ureidoglycolate, generating urea and glyoxylate. Involved in the utilization of allantoin as nitrogen source. The protein is Ureidoglycolate lyase of Agrobacterium fabrum (strain C58 / ATCC 33970) (Agrobacterium tumefaciens (strain C58)).